The chain runs to 177 residues: Parathyroid hormone-related protein (177 aa).

The first 24 residues, 1–24, serve as a signal peptide directing secretion; it reads MLRRLVQQWSVLVFLLSYSVPSRG. The propeptide occupies 25 to 34; the sequence is RSVEGLGRRL. The important for receptor binding stretch occupies residues 57-68; it reads RFFLHHLIAEIH. The interval 74 to 177 is disordered; sequence ATSEVSPNSK…TSLEPSSRTH (104 aa). Over residues 76-90 the composition is skewed to polar residues; that stretch reads SEVSPNSKPAPNTKN. Positions 108–129 match the Nuclear localization signal motif; it reads TNKVETYKEQPLKTPGKKKKGK. Positions 109-118 are enriched in basic and acidic residues; it reads NKVETYKEQP. The segment covering 122 to 132 has biased composition (basic residues); the sequence is PGKKKKGKPGK. The segment covering 161–177 has biased composition (low complexity); it reads PHTSPTSTSLEPSSRTH.

Belongs to the parathyroid hormone family. PTHrP interacts with PTH1R (via N-terminal extracellular domain). In terms of processing, there are several secretory forms, including osteostatin, arising from endoproteolytic cleavage of the initial translation product. Each of these secretory forms is believed to have one or more of its own receptors that mediates the normal paracrine, autocrine and endocrine actions.

The protein resides in the secreted. Its subcellular location is the cytoplasm. It is found in the nucleus. Neuroendocrine peptide which is a critical regulator of cellular and organ growth, development, migration, differentiation and survival and of epithelial calcium ion transport. Acts by binding to its receptor, PTH1R, activating G protein-coupled receptor signaling. Regulates endochondral bone development and epithelial-mesenchymal interactions during the formation of the mammary glands and teeth. Required for skeletal homeostasis. Promotes mammary mesenchyme differentiation and bud outgrowth by modulating mesenchymal cell responsiveness to BMPs. Up-regulates BMPR1A expression in the mammary mesenchyme and this increases the sensitivity of these cells to BMPs and allows them to respond to BMP4 in a paracrine and/or autocrine fashion. BMP4 signaling in the mesenchyme, in turn, triggers epithelial outgrowth and augments MSX2 expression, which causes the mammary mesenchyme to inhibit hair follicle formation within the nipple sheath. Its function is as follows. Potent inhibitor of osteoclastic bone resorption. The protein is Parathyroid hormone-related protein (Pthlh) of Rattus norvegicus (Rat).